The chain runs to 205 residues: CASP-like protein 0U1 (205 aa).

Residues 1 to 38 lie on the Cytoplasmic side of the membrane; sequence MDDAPGASDEAREPLLKRVGASVEGTSLMNHRLMKNPK. A helical membrane pass occupies residues 39–57; the sequence is FRALLVESLMALTTFSFMA. Topologically, residues 58–89 are extracellular; sequence KQTEGLAGPELSTLNDCGEAGCGFTKFYQFKG. A helical membrane pass occupies residues 90–110; that stretch reads VVGVYAGFWAYTVILIAMYVI. Residues 111 to 124 are Cytoplasmic-facing; sequence RKAPPPGTEFASYA. A helical transmembrane segment spans residues 125–145; that stretch reads LFTAAMATFVVMSITECASVV. Over 146-159 the chain is Extracellular; sequence LSSDYYVCKNADYS. Residues 160–180 traverse the membrane as a helical segment; that stretch reads LVSLIFAAATIVLNCLTCAFA. The Cytoplasmic portion of the chain corresponds to 181–205; that stretch reads WRQWGELKFVGLPKTLSALTETYPG.

It belongs to the Casparian strip membrane proteins (CASP) family. In terms of assembly, homodimer and heterodimers.

The protein localises to the cell membrane. This chain is CASP-like protein 0U1, found in Ostreococcus lucimarinus (strain CCE9901).